We begin with the raw amino-acid sequence, 296 residues long: Malonyl-[acyl-carrier protein] O-methyltransferase (296 aa).

It belongs to the methyltransferase superfamily.

The enzyme catalyses malonyl-[ACP] + S-adenosyl-L-methionine = malonyl-[ACP] methyl ester + S-adenosyl-L-homocysteine. The protein operates within cofactor biosynthesis; biotin biosynthesis. Its function is as follows. Converts the free carboxyl group of a malonyl-thioester to its methyl ester by transfer of a methyl group from S-adenosyl-L-methionine (SAM). It allows to synthesize pimeloyl-ACP via the fatty acid synthetic pathway. This is Malonyl-[acyl-carrier protein] O-methyltransferase from Methylovorus sp. (strain MP688).